A 461-amino-acid polypeptide reads, in one-letter code: Bifunctional protein HldE (461 aa).

The ribokinase stretch occupies residues 1 to 311 (MKKILVVGDL…EEIALILNQT (311 aa)). ATP is bound at residue 191 to 194 (NRAE). Asp-260 is a catalytic residue. The segment at 332-461 (FTNGCFDLLH…IEKIKRTHND (130 aa)) is cytidylyltransferase.

This sequence in the N-terminal section; belongs to the carbohydrate kinase PfkB family. In the C-terminal section; belongs to the cytidylyltransferase family. Homodimer.

It catalyses the reaction D-glycero-beta-D-manno-heptose 7-phosphate + ATP = D-glycero-beta-D-manno-heptose 1,7-bisphosphate + ADP + H(+). The enzyme catalyses D-glycero-beta-D-manno-heptose 1-phosphate + ATP + H(+) = ADP-D-glycero-beta-D-manno-heptose + diphosphate. Its pathway is nucleotide-sugar biosynthesis; ADP-L-glycero-beta-D-manno-heptose biosynthesis; ADP-L-glycero-beta-D-manno-heptose from D-glycero-beta-D-manno-heptose 7-phosphate: step 1/4. The protein operates within nucleotide-sugar biosynthesis; ADP-L-glycero-beta-D-manno-heptose biosynthesis; ADP-L-glycero-beta-D-manno-heptose from D-glycero-beta-D-manno-heptose 7-phosphate: step 3/4. Its function is as follows. Catalyzes the phosphorylation of D-glycero-D-manno-heptose 7-phosphate at the C-1 position to selectively form D-glycero-beta-D-manno-heptose-1,7-bisphosphate. Catalyzes the ADP transfer from ATP to D-glycero-beta-D-manno-heptose 1-phosphate, yielding ADP-D-glycero-beta-D-manno-heptose. In Helicobacter pylori (strain P12), this protein is Bifunctional protein HldE.